Reading from the N-terminus, the 510-residue chain is 2-isopropylmalate synthase (510 aa).

The Pyruvate carboxyltransferase domain occupies 5 to 267 (LVIFDTTLRD…DTRIDTTQIV (263 aa)). Residues Asp-14, His-202, His-204, and Asn-238 each contribute to the Mn(2+) site. The interval 392–510 (RLLSLVAHSE…SSLERTHPQV (119 aa)) is regulatory domain.

This sequence belongs to the alpha-IPM synthase/homocitrate synthase family. LeuA type 1 subfamily. Homodimer. It depends on Mn(2+) as a cofactor.

The protein localises to the cytoplasm. It carries out the reaction 3-methyl-2-oxobutanoate + acetyl-CoA + H2O = (2S)-2-isopropylmalate + CoA + H(+). It participates in amino-acid biosynthesis; L-leucine biosynthesis; L-leucine from 3-methyl-2-oxobutanoate: step 1/4. In terms of biological role, catalyzes the condensation of the acetyl group of acetyl-CoA with 3-methyl-2-oxobutanoate (2-ketoisovalerate) to form 3-carboxy-3-hydroxy-4-methylpentanoate (2-isopropylmalate). The chain is 2-isopropylmalate synthase from Nitrosomonas eutropha (strain DSM 101675 / C91 / Nm57).